A 462-amino-acid chain; its full sequence is Bifunctional dihydrofolate reductase-thymidylate synthase (462 aa).

The DHFR domain occupies Thr6–Asn165. Substrate is bound at residue Val10. NADP(+)-binding positions include Ala12 and Gly18–Arg24. Asp32 lines the substrate pocket. NADP(+) is bound by residues Arg49–Thr51 and Ile68–Asn71. Ile101 is a substrate binding site. Gly102–Glu109 contacts NADP(+). Residue Thr122 participates in substrate binding. Residues Glu180–Val462 form a thymidylate synthase region. Arg200 contacts dUMP. Residue Cys345 is part of the active site. DUMP is bound by residues His346, Gln364–Asp368, Asn376, and His406–Tyr408.

It in the N-terminal section; belongs to the dihydrofolate reductase family. The protein in the C-terminal section; belongs to the thymidylate synthase family.

The enzyme catalyses (6S)-5,6,7,8-tetrahydrofolate + NADP(+) = 7,8-dihydrofolate + NADPH + H(+). It carries out the reaction dUMP + (6R)-5,10-methylene-5,6,7,8-tetrahydrofolate = 7,8-dihydrofolate + dTMP. The protein operates within cofactor biosynthesis; tetrahydrofolate biosynthesis; 5,6,7,8-tetrahydrofolate from 7,8-dihydrofolate: step 1/1. Functionally, bifunctional enzyme. Involved in de novo dTMP biosynthesis. Key enzyme in folate metabolism. Catalyzes an essential reaction for de novo glycine and purine synthesis, DNA precursor synthesis, and for the conversion of dUMP to dTMP. The polypeptide is Bifunctional dihydrofolate reductase-thymidylate synthase (Paramecium tetraurelia).